Here is a 32-residue protein sequence, read N- to C-terminus: MSDIN-like toxin proprotein 1 (32 aa).

The propeptide occupies 1-10 (MSDINATRLP). Positions 11–18 (IFWFIYFP) form a cross-link, cyclopeptide (Ile-Pro). A propeptide spanning residues 19 to 32 (CVSDVDSTLTRGER) is cleaved from the precursor.

It belongs to the MSDIN fungal toxin family. Processed by the macrocyclase-peptidase enzyme POPB to yield a toxic cyclic octapeptide. POPB first removes 10 residues from the N-terminus. Conformational trapping of the remaining peptide forces the enzyme to release this intermediate rather than proceed to macrocyclization. The enzyme rebinds the remaining peptide in a different conformation and catalyzes macrocyclization of the N-terminal 8 residues. In terms of tissue distribution, expressed in basidiocarps.

Its function is as follows. Probable toxin that belongs to the MSDIN-like toxin family responsible for a large number of food poisoning cases and deaths. The sequence is that of MSDIN-like toxin proprotein 1 from Amanita exitialis (Guangzhou destroying angel).